A 904-amino-acid polypeptide reads, in one-letter code: Pyrimidine pathway regulatory protein 1 (904 aa).

Residues 1-11 show a composition bias toward basic residues; it reads MKQKKFNSKKS. The disordered stretch occupies residues 1–27; sequence MKQKKFNSKKSNRTDLSKRGDSPNIGI. The segment covering 12-21 has biased composition (basic and acidic residues); the sequence is NRTDLSKRGD. Residues Cys34, Cys37, Cys44, Cys51, Cys54, and Cys61 each coordinate Zn(2+). Residues 34–61 constitute a DNA-binding region (zn(2)-C6 fungal-type); sequence CKRCRLKKIKCDQEFPSCKRCAKLEVPC. Residues 883–904 form a disordered region; sequence GNEGESSYDISKGKNSESGGIF.

As to quaternary structure, binds DNA as a homodimer.

It is found in the nucleus. In terms of biological role, positive regulator of URA1 and URA3 expression. This Saccharomyces cerevisiae (strain ATCC 204508 / S288c) (Baker's yeast) protein is Pyrimidine pathway regulatory protein 1 (PPR1).